Consider the following 461-residue polypeptide: Cysteine--tRNA ligase (461 aa).

Cysteine 28 contacts Zn(2+). A 'HIGH' region motif is present at residues 30–40 (ITVYDLCHIGH). Zn(2+) contacts are provided by cysteine 209, histidine 234, and glutamate 238. The 'KMSKS' region signature appears at 266–270 (KMSKS). Lysine 269 is a binding site for ATP.

It belongs to the class-I aminoacyl-tRNA synthetase family. As to quaternary structure, monomer. Zn(2+) is required as a cofactor.

The protein resides in the cytoplasm. The catalysed reaction is tRNA(Cys) + L-cysteine + ATP = L-cysteinyl-tRNA(Cys) + AMP + diphosphate. This chain is Cysteine--tRNA ligase, found in Cronobacter sakazakii (strain ATCC BAA-894) (Enterobacter sakazakii).